Here is a 524-residue protein sequence, read N- to C-terminus: GMP synthase [glutamine-hydrolyzing] (524 aa).

Residues 9-207 (RILILDFGSQ…VIHICQCIPN (199 aa)) enclose the Glutamine amidotransferase type-1 domain. Cys86 (nucleophile) is an active-site residue. Catalysis depends on residues His181 and Glu183. A GMPS ATP-PPase domain is found at 208 to 399 (WTTKHIIEDS…LGLPADLIYR (192 aa)). Position 235 to 241 (235 to 241 (SGGVDSA)) interacts with ATP.

In terms of assembly, homodimer.

It carries out the reaction XMP + L-glutamine + ATP + H2O = GMP + L-glutamate + AMP + diphosphate + 2 H(+). The protein operates within purine metabolism; GMP biosynthesis; GMP from XMP (L-Gln route): step 1/1. Functionally, catalyzes the synthesis of GMP from XMP. The protein is GMP synthase [glutamine-hydrolyzing] of Coxiella burnetii (strain RSA 493 / Nine Mile phase I).